Here is a 497-residue protein sequence, read N- to C-terminus: Probable cytosol aminopeptidase (497 aa).

Residues Lys-264 and Asp-269 each contribute to the Mn(2+) site. Lys-276 is a catalytic residue. Mn(2+) is bound by residues Asp-287, Asp-347, and Glu-349. Arg-351 is an active-site residue.

This sequence belongs to the peptidase M17 family. Mn(2+) serves as cofactor.

It localises to the cytoplasm. It catalyses the reaction Release of an N-terminal amino acid, Xaa-|-Yaa-, in which Xaa is preferably Leu, but may be other amino acids including Pro although not Arg or Lys, and Yaa may be Pro. Amino acid amides and methyl esters are also readily hydrolyzed, but rates on arylamides are exceedingly low.. It carries out the reaction Release of an N-terminal amino acid, preferentially leucine, but not glutamic or aspartic acids.. Functionally, presumably involved in the processing and regular turnover of intracellular proteins. Catalyzes the removal of unsubstituted N-terminal amino acids from various peptides. The protein is Probable cytosol aminopeptidase of Thermosynechococcus vestitus (strain NIES-2133 / IAM M-273 / BP-1).